The sequence spans 442 residues: Zuotin (442 aa).

A disordered region spans residues 49–84; that stretch reads RQRHGRTFSEDERLEVKNKVQEEVKEESEDEEEDPA. Threonine 55 carries the phosphothreonine modification. The span at 55-71 shows a compositional bias: basic and acidic residues; the sequence is TFSEDERLEVKNKVQEE. 2 positions are modified to phosphoserine: serine 57 and serine 76. A compositionally biased stretch (acidic residues) spans 72 to 83; that stretch reads VKEESEDEEEDP. The J domain occupies 97-167; the sequence is DHYAVLGLSK…VRRRQFDSVD (71 aa). Disordered stretches follow at residues 242 to 270 and 306 to 331; these read DGES…DNAR and GARE…EAAA. Residues 316 to 330 show a composition bias toward basic and acidic residues; it reads KKKEEEERRAAEEAA.

RAC is a heterodimer of the Hsp70/DnaK-type chaperone ssz1 and the Hsp40/DnaJ-type chaperone zuo1. RAC associates with ribosomes via zuo1.

It is found in the cytoplasm. Its function is as follows. Component of the ribosome-associated complex (RAC), a heterodimeric chaperone complex involved in regulation of accurate translation termination and in folding or maintaining nascent polypeptides in a folding-competent state. RAC stimulates the ATPase activity of the ribosome-associated pool of Hsp70-type chaperones SSB1/SSB2 that bind to the nascent polypeptide chain. This is Zuotin (zuo1) from Schizosaccharomyces pombe (strain 972 / ATCC 24843) (Fission yeast).